The following is a 591-amino-acid chain: Inactive metallocarboxypeptidase ECM14 (591 aa).

The first 21 residues, 1 to 21 (MRLFARLEVLAILACAVPIAA), serve as a signal peptide directing secretion. A propeptide spanning residues 22–175 (IPSFLSNSYP…QTIYESYPSS (154 aa)) is cleaved from the precursor. In terms of domain architecture, Peptidase M14 spans 203-523 (DYQPFSVIVT…NAVMVLGRFL (321 aa)). 2 residues coordinate Zn(2+): H265 and E268. Substrate is bound by residues 265 to 268 (HARE), R323, and 340 to 341 (DR). C334 and C357 are joined by a disulfide. N350 and N381 each carry an N-linked (GlcNAc...) asparagine glycan. H397 provides a ligand contact to Zn(2+). 398–399 (SY) lines the substrate pocket. A compositionally biased stretch (basic and acidic residues) spans 533–543 (DWEDESQRPKA). The interval 533–591 (DWEDESQRPKADEDDIPSENELGENDDSWIPFDYRNHDDQNEGEGYDNDEWGFRRRRKG) is disordered. Acidic residues-rich tracts occupy residues 544–559 (DEDD…ENDD) and 573–582 (NEGEGYDNDE).

This sequence belongs to the peptidase M14 family. The cofactor is Zn(2+).

Its subcellular location is the vacuole. The protein resides in the secreted. Inactive carboxypeptidase that may play a role in cell wall organization and biogenesis. This Paracoccidioides lutzii (strain ATCC MYA-826 / Pb01) (Paracoccidioides brasiliensis) protein is Inactive metallocarboxypeptidase ECM14 (ECM14).